We begin with the raw amino-acid sequence, 930 residues long: MAPASEAGPAQDPLFSGLILPRSRILDAEALTRSILAEIDAAGPLDPKSARAIAVRQMTEAKAAGNRALSETFEARPREARGLIRAQAALTDGLVTAALRVACERLHPLANPTEAERIAVLAVGGYGRAEMAPHSDVDLLFLTPWKITPWAEMVIESMLYMLWDLRLKVGHSSRTVKDCLRLGREDITIRTALLEHRFLAGHAPLAAELDETLWNDLFRGTGAEFIDAKLEERGQRHKRQGGQRYVLEPNVKEGKGGLRDLQTLYWIGKYLNRVPSPSGLVAAGLLTRDEFETFERAESFLWAVRCHLHYATGRATDQLTFDLQVEVAARMGYADTRGRRGVEVFMQDYFRHATRVGELTRVFLAQLEARHEKREPKIMGLFRRKKRLKPEYSLVNGRIDVLDPKAFLADKLNLLRIFEEALRTGFLIHPGAMRLIAANLHLIDEEMQHDREANRIFLDMLLRHGNPERALRRMNELGVLGAFIPEFERIVAMMQFNVYHHYTVDEHTIQCISTLAQIERHELDEELPIANRILTDGISRRVIYVALLLHDIGKGRPEDHSILGAQIARRVAPRFGLTAEECETVEWLVRYHLLMSDMAQKRDIGDPRTVRDFAKAVRSKKRLDLLTVLTVCDIRGVGPGTWNNWKAQLLRKLYRDTVTALDAGLESLNRENRADEAKRALRELLEEWDPKDLRAELARHYPPYWQALSNATHAVFARMLRGLGETEIRIDLDPDPDRDATRACFALADHPGIFSRLAGALALVGANVVDARTYTTKDGYATAVFWIQDSEGSPYEISRLPRLTSMIDKTLKGEVVAREALKDRDKLKKREAQFRFPTHIAFDNEGSDIYTIIEVDTRDRPGLLYDLTRTLAANNIYIASAVIATYGAQVVDSFYVKDMFGLKLHQKNRQETLEKKLRQAIVEGAERAKQ.

Residues 1 to 387 (MAPASEAGPA…IMGLFRRKKR (387 aa)) are uridylyltransferase. Positions 388-741 (LKPEYSLVNG…LDPDPDRDAT (354 aa)) are uridylyl-removing. The HD domain occupies 504–626 (VDEHTIQCIS…VRSKKRLDLL (123 aa)). ACT domains lie at 742-818 (RACF…VVAR) and 852-927 (IIEV…GAER).

Belongs to the GlnD family. Mg(2+) serves as cofactor.

The catalysed reaction is [protein-PII]-L-tyrosine + UTP = [protein-PII]-uridylyl-L-tyrosine + diphosphate. It carries out the reaction [protein-PII]-uridylyl-L-tyrosine + H2O = [protein-PII]-L-tyrosine + UMP + H(+). Its activity is regulated as follows. Uridylyltransferase (UTase) activity is inhibited by glutamine, while glutamine activates uridylyl-removing (UR) activity. Functionally, modifies, by uridylylation and deuridylylation, the PII regulatory proteins (GlnB and homologs), in response to the nitrogen status of the cell that GlnD senses through the glutamine level. Under low glutamine levels, catalyzes the conversion of the PII proteins and UTP to PII-UMP and PPi, while under higher glutamine levels, GlnD hydrolyzes PII-UMP to PII and UMP (deuridylylation). Thus, controls uridylylation state and activity of the PII proteins, and plays an important role in the regulation of nitrogen fixation and metabolism. The chain is Bifunctional uridylyltransferase/uridylyl-removing enzyme from Cereibacter sphaeroides (strain ATCC 17023 / DSM 158 / JCM 6121 / CCUG 31486 / LMG 2827 / NBRC 12203 / NCIMB 8253 / ATH 2.4.1.) (Rhodobacter sphaeroides).